Reading from the N-terminus, the 321-residue chain is Leucine-rich repeat-containing protein 46 (321 aa).

LRR repeat units follow at residues 45–66, 67–88, 89–110, and 111–132; these read ELQT…EGLQ, NLHS…ACIP, SLRF…LDLP, and CLQF…EFPQ. In terms of domain architecture, LRRCT spans 142-184; the sequence is NSCTNQDGYRELVTEALPLLLDLDGQPVVERWISDEEDEASSD. A phosphoserine mark is found at S175 and S182. Residues 201-221 are a coiled coil; the sequence is LKELEQELSRHREHRQQTALT. The disordered stretch occupies residues 235 to 321; the sequence is DLPLLPGVPM…TKTTAKRSKK (87 aa).

Its subcellular location is the cell projection. It is found in the cilium. The protein resides in the flagellum. In terms of biological role, required for normal spermatogenesis and male fertility. Plays an important role in sperm flagellum biogenesis. This Homo sapiens (Human) protein is Leucine-rich repeat-containing protein 46 (LRRC46).